Here is a 947-residue protein sequence, read N- to C-terminus: Glutamate receptor 2.8 (947 aa).

Positions methionine 1–glycine 26 are cleaved as a signal peptide. Over glutamine 27–glycine 577 the chain is Extracellular. N-linked (GlcNAc...) asparagine glycosylation is found at asparagine 42, asparagine 118, asparagine 333, asparagine 341, asparagine 348, asparagine 420, asparagine 478, and asparagine 524. The helical transmembrane segment at leucine 578 to phenylalanine 598 threads the bilayer. Residues glutamate 599 to arginine 607 are Cytoplasmic-facing. Residues glycine 608–alanine 628 form a helical membrane-spanning segment. Residues histidine 629–lysine 632 are Cytoplasmic-facing. The helical transmembrane segment at valine 633–threonine 653 threads the bilayer. Over glutamine 654 to glycine 819 the chain is Extracellular. N-linked (GlcNAc...) asparagine glycosylation is found at asparagine 659, asparagine 704, asparagine 723, and asparagine 779. The chain crosses the membrane as a helical span at residues leucine 820–leucine 840. The Cytoplasmic portion of the chain corresponds to tyrosine 841 to glutamine 947.

The protein belongs to the glutamate-gated ion channel (TC 1.A.10.1) family. May form heteromers. As to expression, expressed predominantly in leaves.

It is found in the membrane. Glutamate-gated receptor that probably acts as a non-selective cation channel. May be involved in light-signal transduction and calcium homeostasis via the regulation of calcium influx into cells. In Arabidopsis thaliana (Mouse-ear cress), this protein is Glutamate receptor 2.8 (GLR2.8).